The chain runs to 191 residues: Small ribosomal subunit protein bS6 (191 aa).

The tract at residues 168–191 (KVNLTRKPTPNKSSENKQKVEKQA) is disordered. The segment covering 181–191 (SENKQKVEKQA) has biased composition (basic and acidic residues).

This sequence belongs to the bacterial ribosomal protein bS6 family.

Binds together with bS18 to 16S ribosomal RNA. This is Small ribosomal subunit protein bS6 from Mycoplasmoides gallisepticum (strain R(low / passage 15 / clone 2)) (Mycoplasma gallisepticum).